We begin with the raw amino-acid sequence, 258 residues long: (7aS)-7a-methyl-1,5-dioxo-2,3,5,6,7,7a-hexahydro-1H-indene-carboxyl-CoA hydrolase (258 aa).

Belongs to the enoyl-CoA hydratase/isomerase family.

It carries out the reaction (7aS)-7a-methyl-1,5-dioxo-2,3,5,6,7,7a-hexahydro-1H-indene-carboxyl-CoA + H2O = (3E)-2-(2-carboxylatoethyl)-3-methyl-6-oxocyclohex-1-ene-1-carboxyl-CoA + H(+). The protein operates within steroid metabolism; cholesterol degradation. Involved in the final steps of cholesterol and steroid degradation. Catalyzes the hydrolytic ring D opening of (7aS)-7a-methyl-1,5-dioxo-2,3,5,6,7,7a-hexahydro-1H-indene-carboxyl-CoA (HIEC-CoA) to (3E)-2-(2-carboxylatoethyl)-3-methyl-6-oxocyclohex-1-ene-1-carboxyl-CoA (COCHEA-CoA). This is (7aS)-7a-methyl-1,5-dioxo-2,3,5,6,7,7a-hexahydro-1H-indene-carboxyl-CoA hydrolase from Rhodococcus jostii (strain RHA1).